Consider the following 443-residue polypeptide: Glycerol-3-phosphate acyltransferase 3-like (443 aa).

A run of 3 helical transmembrane segments spans residues 15-35, 146-166, and 170-190; these read WFSCVIVLIMLPAMFGISLGI, ISLRLTVLWVVGVVVRYCILL, and ITLTTIGLTWLVIGTTTVGFL. An HXXXXD motif motif is present at residues 238–243; the sequence is HTSPID. Residues 358-378 form a helical membrane-spanning segment; that stretch reads IMSYLLRMMTSWAIVCNVWYL.

It belongs to the 1-acyl-sn-glycerol-3-phosphate acyltransferase family.

Its subcellular location is the endoplasmic reticulum membrane. The enzyme catalyses sn-glycerol 3-phosphate + an acyl-CoA = a 1-acyl-sn-glycero-3-phosphate + CoA. The catalysed reaction is a 1-acyl-sn-glycero-3-phosphate + an acyl-CoA = a 1,2-diacyl-sn-glycero-3-phosphate + CoA. It participates in glycerolipid metabolism; triacylglycerol biosynthesis. It functions in the pathway phospholipid metabolism; CDP-diacylglycerol biosynthesis; CDP-diacylglycerol from sn-glycerol 3-phosphate: step 1/3. May transfer the acyl-group from acyl-coA to the sn-1 position of glycerol-3-phosphate, an essential step in glycerolipid biosynthesis. Also transfers the acyl-group from acyl-coA to the sn-2 position of 1-acyl-sn-glycerol-3-phosphate (lysophosphatidic acid, or LPA), forming 1,2-diacyl-sn-glycerol-3-phosphate (phosphatidic acid, or PA). The protein is Glycerol-3-phosphate acyltransferase 3-like (agpat9l) of Danio rerio (Zebrafish).